Here is a 425-residue protein sequence, read N- to C-terminus: Ribulose bisphosphate carboxylase (425 aa).

The active-site Proton acceptor is lysine 153. Lysine 155 serves as a coordination point for substrate. Mg(2+) is bound by residues lysine 179, aspartate 181, and glutamate 182. Residue lysine 179 is modified to N6-carboxylysine. Catalysis depends on histidine 269, which acts as the Proton acceptor. Substrate is bound by residues arginine 270, histidine 302, 353–355, and 375–378; these read SGG and QAGG.

It belongs to the RuBisCO large chain family. Type III subfamily. As to quaternary structure, homodimer. In contrast to form I RuBisCO, the form III RuBisCO is composed solely of large subunits. The cofactor is Mg(2+).

It catalyses the reaction 2 (2R)-3-phosphoglycerate + 2 H(+) = D-ribulose 1,5-bisphosphate + CO2 + H2O. It carries out the reaction D-ribulose 1,5-bisphosphate + O2 = 2-phosphoglycolate + (2R)-3-phosphoglycerate + 2 H(+). Reversibly inhibited by O(2). Functionally, catalyzes the addition of molecular CO(2) and H(2)O to ribulose 1,5-bisphosphate (RuBP), generating two molecules of 3-phosphoglycerate (3-PGA). Functions in an archaeal AMP degradation pathway, together with AMP phosphorylase and R15P isomerase. In Methanocaldococcus jannaschii (strain ATCC 43067 / DSM 2661 / JAL-1 / JCM 10045 / NBRC 100440) (Methanococcus jannaschii), this protein is Ribulose bisphosphate carboxylase.